A 183-amino-acid polypeptide reads, in one-letter code: Ribonuclease H (183 aa).

Residues S2–R151 form the RNase H type-1 domain. Residues D11, E57, D79, and D143 each coordinate Mg(2+).

This sequence belongs to the RNase H family. Monomer. Mg(2+) serves as cofactor.

It is found in the cytoplasm. The catalysed reaction is Endonucleolytic cleavage to 5'-phosphomonoester.. Its function is as follows. Endonuclease that specifically degrades the RNA of RNA-DNA hybrids. The protein is Ribonuclease H of Anaeromyxobacter dehalogenans (strain 2CP-C).